A 159-amino-acid chain; its full sequence is Eukaryotic translation initiation factor 5A (159 aa).

Basic and acidic residues predominate over residues 1-12; the sequence is MSDEEHQFESKA. A disordered region spans residues 1–23; it reads MSDEEHQFESKADAGASKTYPQQ. The residue at position 52 (Lys52) is a Hypusine.

The protein belongs to the eIF-5A family. Lys-52 undergoes hypusination, a unique post-translational modification that consists in the addition of a butylamino group from spermidine to lysine side chain, leading to the formation of the unusual amino acid hypusine. eIF-5As are the only known proteins to undergo this modification, which is essential for their function.

In terms of biological role, translation factor that promotes translation elongation and termination, particularly upon ribosome stalling at specific amino acid sequence contexts. Binds between the exit (E) and peptidyl (P) site of the ribosome and promotes rescue of stalled ribosome: specifically required for efficient translation of polyproline-containing peptides as well as other motifs that stall the ribosome. Acts as a ribosome quality control (RQC) cofactor by joining the RQC complex to facilitate peptidyl transfer during CAT tailing step. The protein is Eukaryotic translation initiation factor 5A (EIFSV1) of Senecio vernalis (Spring groundsel).